Here is a 170-residue protein sequence, read N- to C-terminus: Protein-lysine myristoyltransferase HlyC (170 aa).

The active site involves His-23. Heme is bound at residue His-151.

It belongs to the RTX toxin acyltransferase family. In terms of assembly, monomer. Post-translationally, proteolytically cleaved by the protease systems ClpAP, ClpXP and FtsH, leading to its degradation.

It localises to the cytoplasm. It catalyses the reaction tetradecanoyl-[ACP] + L-lysyl-[protein] = N(6)-tetradecanoyl-L-lysyl-[protein] + holo-[ACP] + H(+). The acyltransferase activity is inhibited by heme. Functionally, protein-lysine myristoyltransferase that catalyzes myristoylation of the protoxin (HlyA) at two internal lysine residues, thereby converting it to the active toxin. In Escherichia coli, this protein is Protein-lysine myristoyltransferase HlyC.